The chain runs to 215 residues: Orotate phosphoribosyltransferase (215 aa).

Residue Lys26 coordinates 5-phospho-alpha-D-ribose 1-diphosphate. An orotate-binding site is contributed by 34–35 (FF). 5-phospho-alpha-D-ribose 1-diphosphate contacts are provided by residues 72 to 73 (YK), Arg99, Lys100, Lys103, His105, and 124 to 132 (DDVITAGTA). Positions 128 and 156 each coordinate orotate.

It belongs to the purine/pyrimidine phosphoribosyltransferase family. PyrE subfamily. In terms of assembly, homodimer. Mg(2+) is required as a cofactor.

It catalyses the reaction orotidine 5'-phosphate + diphosphate = orotate + 5-phospho-alpha-D-ribose 1-diphosphate. It participates in pyrimidine metabolism; UMP biosynthesis via de novo pathway; UMP from orotate: step 1/2. Catalyzes the transfer of a ribosyl phosphate group from 5-phosphoribose 1-diphosphate to orotate, leading to the formation of orotidine monophosphate (OMP). The sequence is that of Orotate phosphoribosyltransferase from Shewanella oneidensis (strain ATCC 700550 / JCM 31522 / CIP 106686 / LMG 19005 / NCIMB 14063 / MR-1).